Consider the following 839-residue polypeptide: Elongation factor 2 (839 aa).

The region spanning 17–248 (ENIRNMSVIA…MGRLWGDSYF (232 aa)) is the tr-type G domain. Residues 26-33 (AHVDHGKT), 156-159 (NKVD), and 211-213 (SGL) contribute to the GTP site. H698 carries the post-translational modification Diphthamide.

This sequence belongs to the TRAFAC class translation factor GTPase superfamily. Classic translation factor GTPase family. EF-G/EF-2 subfamily. Post-translationally, phosphorylation by EF-2 kinase completely inactivates EF-2.

Its subcellular location is the cytoplasm. The enzyme catalyses GTP + H2O = GDP + phosphate + H(+). Catalyzes the GTP-dependent ribosomal translocation step during translation elongation. During this step, the ribosome changes from the pre-translocational (PRE) to the post-translocational (POST) state as the newly formed A-site-bound peptidyl-tRNA and P-site-bound deacylated tRNA move to the P and E sites, respectively. Catalyzes the coordinated movement of the two tRNA molecules, the mRNA and conformational changes in the ribosome. The polypeptide is Elongation factor 2 (efbA) (Dictyostelium discoideum (Social amoeba)).